We begin with the raw amino-acid sequence, 408 residues long: Multidrug resistance protein MdtG (408 aa).

A run of 10 helical transmembrane segments spans residues 13–33 (LYIAWLGCFFTGAAFSLVMPF), 51–71 (LWSGVVFSITFLFSAIASPFW), 89–109 (LGMAIVMALMGLVQNIWQFLL), 112–132 (AALGVLGGFVPNANALIAIQV), 138–158 (GWALGTLSTGAVGGALLGPLL), 170–190 (PVFFITAVVLFICFLVTFFFI), 221–241 (LFVTTLIIQVATGSVAPILTL), 253–273 (LAFISGAIAAIPGVSALLSAP), 287–307 (ILVAMLILSVLLLIPMAFVQS), and 375–395 (AVFLVTASVVMINAFYSWLSL).

This sequence belongs to the major facilitator superfamily. DHA1 family. MdtG (TC 2.A.1.2.20) subfamily.

It localises to the cell inner membrane. In Dickeya zeae (strain Ech586) (Dickeya dadantii (strain Ech586)), this protein is Multidrug resistance protein MdtG.